Consider the following 496-residue polypeptide: NADH-quinone oxidoreductase subunit N (496 aa).

Helical transmembrane passes span 8–28 (LLST…VGLI), 37–57 (MFPL…YDFF), 73–93 (QFAG…VLST), 110–130 (LLLL…LLTM), 131–151 (YVGL…HPND), 162–182 (LVLG…IYGL), 203–223 (TILA…LVPF), 235–255 (PAPI…AALV), 271–291 (GLIL…LMAF), 300–320 (MAYS…AVSI), 341–361 (GVLF…AVIT), 386–406 (AAVL…AGFV), 421–441 (VWIA…YLSI), and 464–484 (FGMI…TPLA).

The protein belongs to the complex I subunit 2 family. In terms of assembly, NDH-1 is composed of 14 different subunits. Subunits NuoA, H, J, K, L, M, N constitute the membrane sector of the complex.

The protein resides in the cell membrane. The enzyme catalyses a quinone + NADH + 5 H(+)(in) = a quinol + NAD(+) + 4 H(+)(out). NDH-1 shuttles electrons from NADH, via FMN and iron-sulfur (Fe-S) centers, to quinones in the respiratory chain. The immediate electron acceptor for the enzyme in this species is believed to be a menaquinone. Couples the redox reaction to proton translocation (for every two electrons transferred, four hydrogen ions are translocated across the cytoplasmic membrane), and thus conserves the redox energy in a proton gradient. The protein is NADH-quinone oxidoreductase subunit N of Desulfitobacterium hafniense (strain DSM 10664 / DCB-2).